A 320-amino-acid chain; its full sequence is Homoserine kinase (320 aa).

Position 100-110 (100-110 (PLSSGMGSSAA)) interacts with ATP.

This sequence belongs to the GHMP kinase family. Homoserine kinase subfamily.

Its subcellular location is the cytoplasm. It catalyses the reaction L-homoserine + ATP = O-phospho-L-homoserine + ADP + H(+). It participates in amino-acid biosynthesis; L-threonine biosynthesis; L-threonine from L-aspartate: step 4/5. In terms of biological role, catalyzes the ATP-dependent phosphorylation of L-homoserine to L-homoserine phosphate. In Chlorobium phaeovibrioides (strain DSM 265 / 1930) (Prosthecochloris vibrioformis (strain DSM 265)), this protein is Homoserine kinase.